The sequence spans 107 residues: Replication initiation control protein YabA (107 aa).

Zn(2+) contacts are provided by His-81, Cys-83, Cys-97, and Cys-100.

This sequence belongs to the YabA family. In terms of assembly, homotetramer. Interacts with both DnaA and DnaN, acting as a bridge between these two proteins. Zn(2+) serves as cofactor.

It is found in the cytoplasm. The protein resides in the nucleoid. In terms of biological role, involved in control of chromosome replication initiation. Inhibits the cooperative binding of DnaA to the oriC region, thus negatively regulating initiation of chromosome replication. Inhibits the ability of DnaA-ATP to form a helix on DNA; does not disassemble preformed DnaA-DNA helices. Decreases the residence time of DnaA on the chromosome at its binding sites (oriC, replication forks and promoter-binding sites). Tethers DnaA to the replication machinery via the DNA polymerase beta sliding clamp subunit (dnaN). Associates with oriC and other DnaA targets on the chromosome in a DnaA-dependent manner. This is Replication initiation control protein YabA from Streptococcus pyogenes serotype M1.